Reading from the N-terminus, the 519-residue chain is Protein disulfide-isomerase A5 (519 aa).

The N-terminal stretch at 1–21 is a signal peptide; sequence MARAGPAWLLLAIWVVLPSWL. Cystine bridges form between Cys85–Cys94, Cys182–Cys185, Cys305–Cys308, and Cys426–Cys429. Thioredoxin domains follow at residues 134–261, 270–384, and 378–506; these read FLKD…NPQP, PWAD…NPEA, and WMQN…ALRE. Positions 516 to 519 match the Prevents secretion from ER motif; sequence KEEL.

This sequence belongs to the protein disulfide isomerase family. In terms of assembly, interacts with CALR (via P-domain).

It is found in the endoplasmic reticulum lumen. It catalyses the reaction Catalyzes the rearrangement of -S-S- bonds in proteins.. In Homo sapiens (Human), this protein is Protein disulfide-isomerase A5 (PDIA5).